The sequence spans 505 residues: Catalase (505 aa).

Residues 1–25 are disordered; that stretch reads MSQQDKKLTGVFGHPVSDRENSMTA. Residues His56 and Asn129 contribute to the active site. A heme-binding site is contributed by Tyr339.

It belongs to the catalase family. As to quaternary structure, homodimer. It depends on heme as a cofactor.

It carries out the reaction 2 H2O2 = O2 + 2 H2O. Functionally, decomposes hydrogen peroxide into water and oxygen; serves to protect cells from the toxic effects of hydrogen peroxide. This Staphylococcus aureus protein is Catalase (katA).